The sequence spans 355 residues: Small ribosomal subunit biogenesis GTPase RsgA 1 (355 aa).

The CP-type G domain occupies 103–262; the sequence is GRVADRQAIA…LIDTPGVREF (160 aa). GTP-binding positions include 152–155 and 204–212; these read NKAD and GSSGVGKSS. The Zn(2+) site is built by cysteine 285, cysteine 290, histidine 292, and cysteine 298.

The protein belongs to the TRAFAC class YlqF/YawG GTPase family. RsgA subfamily. Monomer. Associates with 30S ribosomal subunit, binds 16S rRNA. It depends on Zn(2+) as a cofactor.

The protein localises to the cytoplasm. In terms of biological role, one of several proteins that assist in the late maturation steps of the functional core of the 30S ribosomal subunit. Helps release RbfA from mature subunits. May play a role in the assembly of ribosomal proteins into the subunit. Circularly permuted GTPase that catalyzes slow GTP hydrolysis, GTPase activity is stimulated by the 30S ribosomal subunit. In Bacteroides thetaiotaomicron (strain ATCC 29148 / DSM 2079 / JCM 5827 / CCUG 10774 / NCTC 10582 / VPI-5482 / E50), this protein is Small ribosomal subunit biogenesis GTPase RsgA 1.